A 440-amino-acid chain; its full sequence is Glutamyl-tRNA(Gln) amidotransferase subunit D (440 aa).

The Asparaginase/glutaminase domain maps to 94 to 424 (PSVTILGTGG…KEVRRMMLTN (331 aa)). Residues Thr-104, Thr-180, Asp-181, and Lys-258 contribute to the active site.

It belongs to the asparaginase 1 family. GatD subfamily. In terms of assembly, heterodimer of GatD and GatE.

The catalysed reaction is L-glutamyl-tRNA(Gln) + L-glutamine + ATP + H2O = L-glutaminyl-tRNA(Gln) + L-glutamate + ADP + phosphate + H(+). Its function is as follows. Allows the formation of correctly charged Gln-tRNA(Gln) through the transamidation of misacylated Glu-tRNA(Gln) in organisms which lack glutaminyl-tRNA synthetase. The reaction takes place in the presence of glutamine and ATP through an activated gamma-phospho-Glu-tRNA(Gln). The GatDE system is specific for glutamate and does not act on aspartate. This Thermococcus kodakarensis (strain ATCC BAA-918 / JCM 12380 / KOD1) (Pyrococcus kodakaraensis (strain KOD1)) protein is Glutamyl-tRNA(Gln) amidotransferase subunit D.